The sequence spans 416 residues: S-adenosylmethionine synthase (416 aa).

His14 lines the ATP pocket. Residue Asp16 participates in Mg(2+) binding. A K(+)-binding site is contributed by Glu42. Residues Glu55 and Gln98 each contribute to the L-methionine site. Residues 98 to 108 form a flexible loop region; the sequence is QSADINQGVDR. ATP-binding positions include 164–166, 240–241, Asp249, 255–256, Ala272, and Lys276; these read DAK, KF, and RK. Asp249 provides a ligand contact to L-methionine. Lys280 is an L-methionine binding site.

It belongs to the AdoMet synthase family. In terms of assembly, homotetramer; dimer of dimers. Mg(2+) serves as cofactor. K(+) is required as a cofactor.

The protein localises to the cytoplasm. It catalyses the reaction L-methionine + ATP + H2O = S-adenosyl-L-methionine + phosphate + diphosphate. Its pathway is amino-acid biosynthesis; S-adenosyl-L-methionine biosynthesis; S-adenosyl-L-methionine from L-methionine: step 1/1. In terms of biological role, catalyzes the formation of S-adenosylmethionine (AdoMet) from methionine and ATP. The overall synthetic reaction is composed of two sequential steps, AdoMet formation and the subsequent tripolyphosphate hydrolysis which occurs prior to release of AdoMet from the enzyme. The sequence is that of S-adenosylmethionine synthase from Flavobacterium johnsoniae (strain ATCC 17061 / DSM 2064 / JCM 8514 / BCRC 14874 / CCUG 350202 / NBRC 14942 / NCIMB 11054 / UW101) (Cytophaga johnsonae).